The chain runs to 3587 residues: MSVFSKEQVQDMYALTPMQEGMLFHALLDQEHNSHLVQMSISLQGDLDVGLFTDSLHVLVERYDVFRTLFLYEKLKQPLQVVLKQRPIPIEFYDLSACDESEKQLRYTQYKRADQERTFHLAKDPLMRVALFQMSQHDYQVIWSFHHILMDGWCFSIIFDDLLAIYLSLQNKTALSLEPVQPYSRFINWLEKQNKQAALNYWSDYLEAYEQKTTLPKKEAAFAKAFQPTQYRFSLNRTLTKQLGTIASQNQVTLSTVIQTIWGVLLQKYNAAHDVLFGSVVSGRPTDIVGIDKMVGLFINTIPFRVQAKAGQTFSELLQAVHKRTLQSQPYEHVPLYDIQTQSVLKQELIDHLLVIENYPLVEALQKKALNQQIGFTITAVEMFEPTNYDLTVMVMPKEELAFRFDYNAALFDEQVVQKLAGHLQQIADCVANNSGVELCQIPLLTEAETSQLLAKRTETAADYPAATMHELFSRQAEKTPEQVAVVFADQHLTYRELDEKSNQLARFLRKKGIGTGSLVGTLLDRSLDMIVGILGVLKAGGAFVPIDPELPAERIAYMLTHSRVPLVVTQNHLRAKVTTPTETIDINTAVIGEESRAPIESLNQPHDLFYIIYTSGTTGQPKGVMLEHRNMANLMHFTFDQTNIAFHEKVLQYTTCSFDVCYQEIFSTLLSGGQLYLITNELRRHVEKLFAFIQEKQISILSLPVSFLKFIFNEQDYAQSFPRCVKHIITAGEQLVVTHELQKYLRQHRVFLHNHYGPSETHVVTTCTMDPGQAIPELPPIGKPISNTGIYILDEGLQLKPEGIVGELYISGANVGRGYLHQPELTAEKFLDNPYQPGERMYRTGDLALWLPDGQLEFLGRIDHQVKIRGHRIELGEIESRLLNHPAIKEAVVIDRADETGGKFLCAYVVLQKALSDEEMRAYLAQALPEYMIPSFFVTLERIPVTPNGKTDRRALPKPEGSAKTKADYVAPTTELEQKLVAIWEQILGVSPIGIQDHFFTLGGHSLKAIQLISRIQKECQADVPLRVLFEQPTIQALAAYVEGGEESAYLAIPQAEPQAYYPVSSAQKRMLILNQLDPHSTVYNLPVAMILEGTLDKARLEHAISNLVARHESLRTSFHTINGEPVSRIHEQGHLPIVYLETAEEQVNEVILGFMQPFDLVTAPLCRVGLVKLAENRHVLIIDMHHIISDGVSSQLILNDFSRLYQNKALPEQRIHYKDFAVWEKAWTQTTDYQKQEKYWLDRFAGEIPVLNLPMDYPRPAVQSFEGERYLFRTEKQLLESLQDVAQKTGTTLYMVLLAAYHVLLSKYSGQDDVMIGTVTAGRVHPDTESMTGMFVNTLAMRNQSAPTKTFRQFLLEVKDNTLAAFEHGQYPFEELVEKLAIQRNRSRNPLFDTLFILQNMDADLIELDGLTVTPYVPEGEVAKFDLSLEASENQAGLSFCFEFCTKLFARETIERMSLHYLQILQAVSANTEQELAQIEMLTAHEKQELLVHFNDTAALYPAESTLSQLFEDQAQKTPEQTAVVFGDKRLTYRELNERANQLAHTLRAKGVQAEQSVGIMAQRSLEMAIGIIAILKAGGAYVPIDPDYPNERIAYMLEDCRRLVLTQQQLAEKMTANVECLYLDEEGSYSPQTENIEPIHTAADLAYIIYTSGTTGRPKGVMVEHRGIVNSVTWNRDEFALSVRDSGTLSLSFAFDAFALTFFTLIVSGSTVVLMPDHEAKDPIALRNLIAAWECSYVVFVPSMFQAILECSTPADIRSIQAVMLGGEKLSPKLVQLCKAMHPQMSVMNAYGPTESSVMATYLRDTQPDQPITIGRPIANTAIYIVDQHHQLLPVGVVGEICIGGHGLARGYWKKPELTAEKFVANPAVPGERMYKTGDLGRWLHDGTIDFIGRVDDQIKVRGYRIEVGEIEAVLLAYDQTNEAIVVAYQDDRGDSYLAAYVTGKTAIEESELRAHLLRELPAYMVPTYLIQLDAFPLTPNGKVDRKALPKPEGKPATGAAYVAPATEVEAKLVAIWENALGISGVGVLDHFFELGGHSLKAMTVVAQVHREFQIDLLLKQFFAAPTIRDLARLIEHSEQAAGAAIQPAEPQAYYPVSSAQQRMYLLHQLEGAGISYNTPGIIMLEGKLDREQLANALQALVDRHDILRTSFEMVGDELVQKIHDRVAVNMEYVTAEEQQIDDLFHAFVRPFDLSVPPLLRMSLVKLADERHLLLYDMHHIAADAASITILFDELAELYQGRELPEMRIQYKDFAVWQKALHESDAFKQQEAYWLSTFAGNITAVDVPTDFPRPAVKSFAGGQVTLSMDQELLSALHELAAHTNTTLFMVLLAAYNVLLAKYAGQDDIIVGTPISGRSRAELAPVVGMFVHTLAIRNKPTAEKTFKQFLQEVKQNALDAFDHQDYPFESLVEKLGIPRDPGRNPLFDTMFILQNDELHAKTLDQLVYRPYESDSALDVAKFDLSFHLTERETDLFLRLEYCTKLFKQQTVERMAHHFLQILRAVTANPENELQEIEMLTAAEKQMLLVAFNDTHREYRADQTIQQLFEELAEKMPEHTALVFEEKRMSFRELNERANQLAAVLREKGVGPAQIVALLVERSAEMVIATLATLKAGGAFLPVDPDYPEERIRYMLEDSQAKLVVTHAHLLHKVSSQSEVVDVDDPGSYATQTDNLPCANTPSDLAYIIYTSGTTGKPKGVMLEHKGVANLQAVFAHHLGVTPQDRAGHFASISFDASVWDMFGPLLSGATLYVLSRDVINDFQRFAEYVRDNAITFLTLPPTYAIYLEPEQVPSLRTLITAGSASSVALVDKWKEKVTYVNGYGPTESTVCATLWKAKPDEPVETITIGKPIQNTKLYIVDDQLQLKAPGQMGELCISGLSLARGYWNRPELTAEKFVDNPFVPGTKMYRTGDLARWLPDGTIEYLGRIDHQVKIRGHRVELGEVESVLLRYDTVKEAAAITHEDDRGQAYLCAYYVAEGEATPAQLRAYMENELPNYMVPAFFIQLEKMPLTPNDKIDRKALPKPNQEENRTEQYAAPQTELEQLLAGIWADVLGIKQVGTQDNFFELGGDSIKAIQVSTRLNASGWTLAMKELFQYPTIEEAALRVIPNSRESEQGVVEGEIALTPIQKWFFANNFTDRHHWNQAVMLFREDGFDEGLVRQAFQQIVEHHDALRMVYKQEDGAIKQINRGLTDERFRFYSYDLKNHANSEARILELSDQIQSSIDLEHGPLVHVALFATKDGDHLLVAIHHLVVDGVSWRILFEDFSSAYSQALHQQEIVLPKKTDSFKDWAAQLQKYADSDELLREVAYWHNLETTTTTAALPTDFVTADRKQKHTRTLSFALTVPQTENLLRHVHHAYHTEMNDLLLTALGLAVKDWAHTNGVVINLEGHGREDIQNEMNVTRTIGWFTSQYPVVLDMEKAEDLPYQIKQTKENLRRIPKKGIGYEILRTLTTSQLQPPLAFTLRPEISFNYLGQFESDGKTGGFTFSPLGTGQLFSPESERVFLLDISAMIEDGELRISVGYSRLQYEEKTIASLADSYRKHLLGIIEHCMAKEEGEYTPSDLGDEELSMEELENILEWI.

A domain 1 (Proline-activating) region spans residues 466-1045; the sequence is AATMHELFSR…IQALAAYVEG (580 aa). Carrier domains lie at 972-1047 and 2007-2082; these read APTT…EGGE and APAT…EHSE. O-(pantetheine 4'-phosphoryl)serine is present on residues serine 1007 and serine 2042. The domain 2 (Phenylalanine-activating) stretch occupies residues 1522–2081; the sequence is EQTAVVFGDK…RDLARLIEHS (560 aa). Positions 2540–3122 are domain 3 (D-phenylalanine-activating); it reads YRADQTIQQL…NSRESEQGVV (583 aa). The disordered stretch occupies residues 3017–3040; that stretch reads NDKIDRKALPKPNQEENRTEQYAA. The span at 3018-3035 shows a compositional bias: basic and acidic residues; the sequence is DKIDRKALPKPNQEENRT. The Carrier 3 domain occupies 3040-3114; that stretch reads APQTELEQLL…EAALRVIPNS (75 aa). Residue serine 3075 is modified to O-(pantetheine 4'-phosphoryl)serine.

The protein belongs to the ATP-dependent AMP-binding enzyme family. As to quaternary structure, large multienzyme complex of TycA, TycB and TycC. Pantetheine 4'-phosphate is required as a cofactor.

It carries out the reaction L-phenylalanine + ATP + H2O = D-phenylalanine + AMP + diphosphate + H(+). It functions in the pathway antibiotic biosynthesis; tyrocidine biosynthesis. Activates the second to fourth amino acids in tyrocidine (in tyrocidine A, Pro, Phe, and D-Phe) and epimerizes the last one. This is Tyrocidine synthase 2 (tycB) from Brevibacillus parabrevis.